The primary structure comprises 426 residues: Probable imidazolonepropionase (426 aa).

Residues Tyr-159 and His-192 each contribute to the 4-imidazolone-5-propanoate site. Tyr-159 serves as a coordination point for N-formimidoyl-L-glutamate. His-260 is a Fe(3+) binding site. His-260 contacts Zn(2+). A 4-imidazolone-5-propanoate-binding site is contributed by Glu-263. Asp-334 is a binding site for Fe(3+). Asp-334 lines the Zn(2+) pocket. Asn-336 lines the N-formimidoyl-L-glutamate pocket.

Belongs to the metallo-dependent hydrolases superfamily. HutI family. It depends on Zn(2+) as a cofactor. Fe(3+) is required as a cofactor.

The enzyme catalyses 4-imidazolone-5-propanoate + H2O = N-formimidoyl-L-glutamate. It functions in the pathway amino-acid degradation; L-histidine degradation into L-glutamate; N-formimidoyl-L-glutamate from L-histidine: step 3/3. The sequence is that of Probable imidazolonepropionase (Amdhd1) from Mus musculus (Mouse).